Here is a 339-residue protein sequence, read N- to C-terminus: Serpentine receptor class delta-19 (339 aa).

7 helical membrane passes run 2-22 (IIFF…LNLL), 39-59 (ATLI…DLFI), 90-110 (VGLS…LISF), 130-150 (ITIM…TLFV), 187-207 (VYAV…IFVL), 242-262 (IIPM…SGLL), and 270-290 (SIFS…LYFV).

It belongs to the nematode receptor-like protein srd family.

The protein localises to the membrane. This chain is Serpentine receptor class delta-19 (srd-19), found in Caenorhabditis elegans.